The sequence spans 627 residues: Protein fem-1 homolog B (627 aa).

ANK repeat units lie at residues 45–74 (QRSTPLIIAARNGHTKVVRLLLEHYRVQTQ), 87–116 (DGATALWCAAGAGHFEVVKLLVSHGANVNH), 120–149 (TNSTPLRAACFDGRLDIVKYLVENNANISI), 153–182 (YDNTCLMIAAYKGHTDVVRYLLEQHADPNA), 186–215 (CGATALHFAAEAGHLEIVRELVKWKAAMMV), and 218–248 (HGMTPLKVAAESCKADVVELLLAHAGCNRRS). The stretch at 344 to 377 (SHPIIYRGAVYADNMEFEQCIKLWLHALHLRQKG) is one TPR repeat. 2 ANK repeats span residues 483-527 (DGST…DVNA) and 531-568 (EGNSPLHLIVQYHRPISDFLTLHSIIISLVEAGAHTDM).

This sequence belongs to the fem-1 family. As to quaternary structure, component of a CRL2 E3 ubiquitin-protein ligase complex, also named ECS (Elongin BC-CUL2/5-SOCS-box protein) complex.

It localises to the cytoplasm. The protein localises to the nucleus. It participates in protein modification; protein ubiquitination. Its function is as follows. Substrate-recognition component of a Cul2-RING (CRL2) E3 ubiquitin-protein ligase complex of the DesCEND (destruction via C-end degrons) pathway, which recognizes a C-degron located at the extreme C terminus of target proteins, leading to their ubiquitination and degradation. The C-degron recognized by the DesCEND pathway is usually a motif of less than ten residues and can be present in full-length proteins, truncated proteins or proteolytically cleaved forms. The CRL2(FEM1B) complex specifically recognizes proteins ending with -Gly-Leu-Asp-Arg, leading to their ubiquitination and degradation. In Gallus gallus (Chicken), this protein is Protein fem-1 homolog B.